The following is a 479-amino-acid chain: Flap endonuclease 1 (479 aa).

Positions 1-106 (MGIKGLTKFI…SELEKRGEKR (106 aa)) are N-domain. Mg(2+) is bound at residue Asp34. Positions 47 and 72 each coordinate DNA. Positions 88, 160, 162, 181, and 183 each coordinate Mg(2+). The interval 124–266 (EIKKQSGRTV…KTAYNLIKEY (143 aa)) is I-domain. A DNA-binding site is contributed by Glu160. Residues Gly244 and Asp246 each coordinate DNA. A Mg(2+)-binding site is contributed by Asp246. Residues 349–357 (TQRRLDTFF) form an interaction with PCNA region. A disordered region spans residues 379–455 (AKGKGKKREL…NSDSGNIKNE (77 aa)). Basic and acidic residues predominate over residues 403–428 (NIKDEKKNTDKMDELKNKSDENFVKD).

Belongs to the XPG/RAD2 endonuclease family. FEN1 subfamily. Interacts with PCNA. Three molecules of FEN1 bind to one PCNA trimer with each molecule binding to one PCNA monomer. PCNA stimulates the nuclease activity without altering cleavage specificity. The cofactor is Mg(2+). Post-translationally, phosphorylated. Phosphorylation upon DNA damage induces relocalization to the nuclear plasma.

Its subcellular location is the nucleus. The protein localises to the nucleolus. The protein resides in the nucleoplasm. It is found in the mitochondrion. Structure-specific nuclease with 5'-flap endonuclease and 5'-3' exonuclease activities involved in DNA replication and repair. During DNA replication, cleaves the 5'-overhanging flap structure that is generated by displacement synthesis when DNA polymerase encounters the 5'-end of a downstream Okazaki fragment. It enters the flap from the 5'-end and then tracks to cleave the flap base, leaving a nick for ligation. Also involved in the long patch base excision repair (LP-BER) pathway, by cleaving within the apurinic/apyrimidinic (AP) site-terminated flap. Acts as a genome stabilization factor that prevents flaps from equilibrating into structures that lead to duplications and deletions. Also possesses 5'-3' exonuclease activity on nicked or gapped double-stranded DNA, and exhibits RNase H activity. Also involved in replication and repair of rDNA and in repairing mitochondrial DNA. The chain is Flap endonuclease 1 from Plasmodium chabaudi chabaudi.